The chain runs to 383 residues: Chorismate synthase (383 aa).

The NADP(+) site is built by Arg40 and Arg46. FMN contacts are provided by residues Arg128–Ser130, Gly291, Lys306–Thr310, and Arg332.

This sequence belongs to the chorismate synthase family. Homotetramer. FMNH2 is required as a cofactor.

The catalysed reaction is 5-O-(1-carboxyvinyl)-3-phosphoshikimate = chorismate + phosphate. It functions in the pathway metabolic intermediate biosynthesis; chorismate biosynthesis; chorismate from D-erythrose 4-phosphate and phosphoenolpyruvate: step 7/7. Catalyzes the anti-1,4-elimination of the C-3 phosphate and the C-6 proR hydrogen from 5-enolpyruvylshikimate-3-phosphate (EPSP) to yield chorismate, which is the branch point compound that serves as the starting substrate for the three terminal pathways of aromatic amino acid biosynthesis. This reaction introduces a second double bond into the aromatic ring system. This is Chorismate synthase from Moorella thermoacetica (strain ATCC 39073 / JCM 9320).